The sequence spans 243 residues: 7-carboxy-7-deazaguanine synthase (243 aa).

Substrate is bound by residues 9-11 (IMG) and R24. In terms of domain architecture, Radical SAM core spans 15–243 (YIGRRFIFVR…IQMHKYLGML (229 aa)). 3 residues coordinate [4Fe-4S] cluster: C28, C32, and C35. Residue T84 participates in substrate binding. G86 lines the S-adenosyl-L-methionine pocket.

The protein belongs to the radical SAM superfamily. 7-carboxy-7-deazaguanine synthase family. Homodimer. [4Fe-4S] cluster is required as a cofactor. S-adenosyl-L-methionine serves as cofactor. The cofactor is Mg(2+).

The catalysed reaction is 6-carboxy-5,6,7,8-tetrahydropterin + H(+) = 7-carboxy-7-deazaguanine + NH4(+). Its pathway is purine metabolism; 7-cyano-7-deazaguanine biosynthesis. In terms of biological role, catalyzes the complex heterocyclic radical-mediated conversion of 6-carboxy-5,6,7,8-tetrahydropterin (CPH4) to 7-carboxy-7-deazaguanine (CDG), a step common to the biosynthetic pathways of all 7-deazapurine-containing compounds. The polypeptide is 7-carboxy-7-deazaguanine synthase (Methanocaldococcus jannaschii (strain ATCC 43067 / DSM 2661 / JAL-1 / JCM 10045 / NBRC 100440) (Methanococcus jannaschii)).